The primary structure comprises 61 residues: uncharacterized protein (61 aa).

The interval 23–61 (VPTKWQDYKKPGPNQKYTSDGKKRRRIRRSQKSILGVRS) is disordered. Residues 44–53 (KKRRRIRRSQ) are compositionally biased toward basic residues.

This is an uncharacterized protein from Archaeoglobus fulgidus (strain ATCC 49558 / DSM 4304 / JCM 9628 / NBRC 100126 / VC-16).